Reading from the N-terminus, the 177-residue chain is SPbeta prophage-derived uncharacterized N-acetyltransferase YokL (177 aa).

The region spanning L11–E170 is the N-acetyltransferase domain.

Belongs to the acetyltransferase family.

The chain is SPbeta prophage-derived uncharacterized N-acetyltransferase YokL (yokL) from Bacillus subtilis (strain 168).